A 295-amino-acid chain; its full sequence is Foldase protein PrsA (295 aa).

The first 19 residues, 1–19 (MKKVLIGFASIAMAFTLAA), serve as a signal peptide directing secretion. C20 is lipidated: N-palmitoyl cysteine. C20 carries S-diacylglycerol cysteine lipidation. The PpiC domain occupies 136 to 229 (EPKVTVAQIL…YGYQVIKMIN (94 aa)).

Belongs to the PrsA family.

The protein localises to the cell membrane. It carries out the reaction [protein]-peptidylproline (omega=180) = [protein]-peptidylproline (omega=0). Functionally, plays a major role in protein secretion by helping the post-translocational extracellular folding of several secreted proteins. The protein is Foldase protein PrsA of Pediococcus pentosaceus (strain ATCC 25745 / CCUG 21536 / LMG 10740 / 183-1w).